The primary structure comprises 155 residues: uncharacterized protein (155 aa).

A signal peptide spans 1–30; it reads MTYNTNTSLSSYAGLSAFALSVFCILWGTA.

This is an uncharacterized protein from Treponema pallidum (strain Nichols).